A 406-amino-acid polypeptide reads, in one-letter code: 2,3-bisphosphoglycerate-independent phosphoglycerate mutase (406 aa).

Residues 156–183 are disordered; that stretch reads NLSDKISDSDPHSEGKPPEPIRPLDPSA. Residues 160–174 show a composition bias toward basic and acidic residues; that stretch reads KISDSDPHSEGKPPE.

The protein belongs to the BPG-independent phosphoglycerate mutase family. A-PGAM subfamily.

It catalyses the reaction (2R)-2-phosphoglycerate = (2R)-3-phosphoglycerate. Its pathway is carbohydrate degradation; glycolysis; pyruvate from D-glyceraldehyde 3-phosphate: step 3/5. Functionally, catalyzes the interconversion of 2-phosphoglycerate and 3-phosphoglycerate. This Thermoplasma volcanium (strain ATCC 51530 / DSM 4299 / JCM 9571 / NBRC 15438 / GSS1) protein is 2,3-bisphosphoglycerate-independent phosphoglycerate mutase.